Consider the following 463-residue polypeptide: tRNA modification GTPase MnmE (463 aa).

The (6S)-5-formyl-5,6,7,8-tetrahydrofolate site is built by R26, E88, and R127. In terms of domain architecture, TrmE-type G spans 224-383 (GLATAIIGRP…LEQRIAKMFF (160 aa)). K(+) is bound at residue N234. Residues 234–239 (NVGKSS), 253–259 (TDVAGTT), and 278–281 (DTAG) contribute to the GTP site. S238 serves as a coordination point for Mg(2+). 3 residues coordinate K(+): T253, V255, and T258. T259 lines the Mg(2+) pocket. A (6S)-5-formyl-5,6,7,8-tetrahydrofolate-binding site is contributed by K463.

This sequence belongs to the TRAFAC class TrmE-Era-EngA-EngB-Septin-like GTPase superfamily. TrmE GTPase family. Homodimer. Heterotetramer of two MnmE and two MnmG subunits. It depends on K(+) as a cofactor.

The protein resides in the cytoplasm. Its function is as follows. Exhibits a very high intrinsic GTPase hydrolysis rate. Involved in the addition of a carboxymethylaminomethyl (cmnm) group at the wobble position (U34) of certain tRNAs, forming tRNA-cmnm(5)s(2)U34. This Lactiplantibacillus plantarum (strain ATCC BAA-793 / NCIMB 8826 / WCFS1) (Lactobacillus plantarum) protein is tRNA modification GTPase MnmE.